We begin with the raw amino-acid sequence, 209 residues long: Protein GrpE (209 aa).

Residues 1–18 (MKIFNKDGNKNSKEDTKA) show a composition bias toward basic and acidic residues. The interval 1-60 (MKIFNKDGNKNSKEDTKAGAENSEAQNSGSSAEEVNKARENPEEASASSEAEKSPEVKCQ) is disordered. The span at 23–33 (SEAQNSGSSAE) shows a compositional bias: polar residues. Residues 50 to 60 (EAEKSPEVKCQ) show a composition bias toward basic and acidic residues.

Belongs to the GrpE family. In terms of assembly, homodimer.

The protein resides in the cytoplasm. Functionally, participates actively in the response to hyperosmotic and heat shock by preventing the aggregation of stress-denatured proteins, in association with DnaK and GrpE. It is the nucleotide exchange factor for DnaK and may function as a thermosensor. Unfolded proteins bind initially to DnaJ; upon interaction with the DnaJ-bound protein, DnaK hydrolyzes its bound ATP, resulting in the formation of a stable complex. GrpE releases ADP from DnaK; ATP binding to DnaK triggers the release of the substrate protein, thus completing the reaction cycle. Several rounds of ATP-dependent interactions between DnaJ, DnaK and GrpE are required for fully efficient folding. This is Protein GrpE from Methanosarcina barkeri (strain Fusaro / DSM 804).